The sequence spans 178 residues: Peptidyl-prolyl cis-trans isomerase H (178 aa).

Residues 14–177 (FFDISIGDVP…LPVKITECGQ (164 aa)) form the PPIase cyclophilin-type domain.

The protein belongs to the cyclophilin-type PPIase family. PPIase H subfamily.

Its subcellular location is the nucleus. The enzyme catalyses [protein]-peptidylproline (omega=180) = [protein]-peptidylproline (omega=0). Its function is as follows. PPIases accelerate the folding of proteins. It catalyzes the cis-trans isomerization of proline imidic peptide bonds in oligopeptides. The sequence is that of Peptidyl-prolyl cis-trans isomerase H (cyp7) from Rhizopus delemar (strain RA 99-880 / ATCC MYA-4621 / FGSC 9543 / NRRL 43880) (Mucormycosis agent).